The sequence spans 109 residues: Large ribosomal subunit protein uL22 (109 aa).

Belongs to the universal ribosomal protein uL22 family. In terms of assembly, part of the 50S ribosomal subunit.

In terms of biological role, this protein binds specifically to 23S rRNA; its binding is stimulated by other ribosomal proteins, e.g. L4, L17, and L20. It is important during the early stages of 50S assembly. It makes multiple contacts with different domains of the 23S rRNA in the assembled 50S subunit and ribosome. Functionally, the globular domain of the protein is located near the polypeptide exit tunnel on the outside of the subunit, while an extended beta-hairpin is found that lines the wall of the exit tunnel in the center of the 70S ribosome. The sequence is that of Large ribosomal subunit protein uL22 from Cupriavidus taiwanensis (strain DSM 17343 / BCRC 17206 / CCUG 44338 / CIP 107171 / LMG 19424 / R1) (Ralstonia taiwanensis (strain LMG 19424)).